A 388-amino-acid chain; its full sequence is Succinate--CoA ligase [ADP-forming] subunit beta (388 aa).

The 236-residue stretch at 9 to 244 folds into the ATP-grasp domain; it reads KEILRKFGVA…LDEEDPAEIE (236 aa). ATP-binding positions include Lys46, 53–55, Glu99, Ala102, and Glu107; that span reads GRG. 2 residues coordinate Mg(2+): Asn199 and Asp213. Residues Asn264 and 321 to 323 contribute to the substrate site; that span reads GIM.

It belongs to the succinate/malate CoA ligase beta subunit family. Heterotetramer of two alpha and two beta subunits. Requires Mg(2+) as cofactor.

The catalysed reaction is succinate + ATP + CoA = succinyl-CoA + ADP + phosphate. The enzyme catalyses GTP + succinate + CoA = succinyl-CoA + GDP + phosphate. It functions in the pathway carbohydrate metabolism; tricarboxylic acid cycle; succinate from succinyl-CoA (ligase route): step 1/1. Succinyl-CoA synthetase functions in the citric acid cycle (TCA), coupling the hydrolysis of succinyl-CoA to the synthesis of either ATP or GTP and thus represents the only step of substrate-level phosphorylation in the TCA. The beta subunit provides nucleotide specificity of the enzyme and binds the substrate succinate, while the binding sites for coenzyme A and phosphate are found in the alpha subunit. The sequence is that of Succinate--CoA ligase [ADP-forming] subunit beta from Burkholderia mallei (strain NCTC 10247).